Reading from the N-terminus, the 255-residue chain is MYSINAHAKVNIFLKITGHENGYHTLLSRFMRVDDLYDTITLVPGTFDSFTLEGCKGVPLHFNTIYKAYEALLEPFPKLEDFFKSHKVVVEKSIPSQAGLGGGSSDAGAFMRLINSLSQNPLSTDALAKLGSSIGADVPFFVYNYPSANVRGFGEIVEPFRETPLKLELFTPDIGCDTAKVYQTYHKYLLRTLDPKSFFGWENMDSGTLLQLIADPVALNDLYPAALSTCPALEKLDTKGWFFSGSGSTFFRVKD.

The active site involves Lys-9. Residue 95 to 105 (PSQAGLGGGSS) participates in ATP binding. Residue Asp-137 is part of the active site.

The protein belongs to the GHMP kinase family. IspE subfamily.

It catalyses the reaction 4-CDP-2-C-methyl-D-erythritol + ATP = 4-CDP-2-C-methyl-D-erythritol 2-phosphate + ADP + H(+). Its pathway is isoprenoid biosynthesis; isopentenyl diphosphate biosynthesis via DXP pathway; isopentenyl diphosphate from 1-deoxy-D-xylulose 5-phosphate: step 3/6. Functionally, catalyzes the phosphorylation of the position 2 hydroxy group of 4-diphosphocytidyl-2C-methyl-D-erythritol. In Sulfurovum sp. (strain NBC37-1), this protein is 4-diphosphocytidyl-2-C-methyl-D-erythritol kinase.